We begin with the raw amino-acid sequence, 548 residues long: Sulochrin halogenase gedL (548 aa).

Gly-14, Ala-17, and Glu-47 together coordinate FAD. Chloride is bound by residues Ser-333 and Gly-334. Val-335 is a binding site for FAD.

The protein belongs to the flavin-dependent halogenase family.

It carries out the reaction sulochrin + 2 FADH2 + 2 chloride + 2 O2 = dihydrogeodin + 2 FAD + 4 H2O + H(+). It functions in the pathway secondary metabolite biosynthesis. In terms of biological role, sulochrin halogenase; part of the gene cluster that mediates the biosynthesis of geodin, an intermediate in the biosynthesis of other natural products. The pathway begins with the synthesis of atrochrysone thioester by the polyketide synthase (PKS) gedC. The atrochrysone carboxyl ACP thioesterase gedB then breaks the thioester bond and releases the atrochrysone carboxylic acid from gedC. The atrochrysone carboxylic acid is then converted to atrochrysone which is further transformed into emodinanthrone. The next step is performed by the emodinanthrone oxygenase gedH that catalyzes the oxidation of emodinanthrone to emodin. Emodin O-methyltransferase encoded probably by gedA then catalyzes methylation of the 8-hydroxy group of emodin to form questin. Ring cleavage of questin by questin oxidase gedK leads to desmethylsulochrin via several intermediates including questin epoxide. Another methylation step probably catalyzed by methyltransferase gedG leads to the formation of sulochrin which is further converted to dihydrogeodin by the sulochrin halogenase gedL. Finally, the dihydrogeodin oxidase gedJ catalyzes the stereospecific phenol oxidative coupling reaction converting dihydrogeodin to geodin. The polypeptide is Sulochrin halogenase gedL (Aspergillus terreus (strain NIH 2624 / FGSC A1156)).